The following is a 321-amino-acid chain: MGTTTLAWNINNTAENGSYTEMFSCITKFNTLNFLTVIIAVVGLAGNGIVLWLLAFHLHRNAFSVYVLNLAGADFLYLFTQVVHSLECVLQLDNNSFYILLIVTMFAYLAGLCMIAAISAERCLSVMWPIWYHCQRPRHTSAIMCALVWVSSLLLSLVVGLGCGFLFSYYDYYFCITLNFITAAFLIVLSVVLSVSSLALLVKIVWGSHRIPVTRFFVTIALTVVVFIYFGMPFGICWFLLSRIMEFDSIFFNNVYEIIEFLSCVNSCANPIIYFLVGSIRQHRLRWQSLKLLLQRAMQDTPEEESGERGPSQRSGELETV.

At 1 to 33 the chain is on the extracellular side; sequence MGTTTLAWNINNTAENGSYTEMFSCITKFNTLN. N-linked (GlcNAc...) asparagine glycans are attached at residues Asn-11 and Asn-16. A helical membrane pass occupies residues 34–54; it reads FLTVIIAVVGLAGNGIVLWLL. Over 55-62 the chain is Cytoplasmic; the sequence is AFHLHRNA. Residues 63 to 83 form a helical membrane-spanning segment; it reads FSVYVLNLAGADFLYLFTQVV. Topologically, residues 84–97 are extracellular; that stretch reads HSLECVLQLDNNSF. Asn-94 carries N-linked (GlcNAc...) asparagine glycosylation. A helical membrane pass occupies residues 98–118; sequence YILLIVTMFAYLAGLCMIAAI. The Cytoplasmic portion of the chain corresponds to 119 to 146; that stretch reads SAERCLSVMWPIWYHCQRPRHTSAIMCA. The helical transmembrane segment at 147-167 threads the bilayer; the sequence is LVWVSSLLLSLVVGLGCGFLF. Residues 168 to 172 lie on the Extracellular side of the membrane; the sequence is SYYDY. The chain crosses the membrane as a helical span at residues 173-193; that stretch reads YFCITLNFITAAFLIVLSVVL. At 194-215 the chain is on the cytoplasmic side; sequence SVSSLALLVKIVWGSHRIPVTR. Residues 216-236 traverse the membrane as a helical segment; it reads FFVTIALTVVVFIYFGMPFGI. Residues 237-257 lie on the Extracellular side of the membrane; sequence CWFLLSRIMEFDSIFFNNVYE. A helical transmembrane segment spans residues 258-278; sequence IIEFLSCVNSCANPIIYFLVG. At 279-321 the chain is on the cytoplasmic side; it reads SIRQHRLRWQSLKLLLQRAMQDTPEEESGERGPSQRSGELETV. The tract at residues 299–321 is disordered; that stretch reads QDTPEEESGERGPSQRSGELETV.

It belongs to the G-protein coupled receptor 1 family. Mas subfamily.

Its subcellular location is the membrane. Functionally, orphan receptor. Probably involved in the function of nociceptive neurons. May regulate nociceptor function and/or development, including the sensation or modulation of pain. In Mus musculus (Mouse), this protein is Mas-related G-protein coupled receptor member B4 (Mrgprb4).